The primary structure comprises 98 residues: uncharacterized protein (98 aa).

The span at M1 to R10 shows a compositional bias: basic residues. Positions M1 to R21 are disordered.

This is an uncharacterized protein from Mycobacterium bovis (strain ATCC BAA-935 / AF2122/97).